A 478-amino-acid chain; its full sequence is Probable serine carboxypeptidase CPVL (478 aa).

A signal peptide spans 1–22 (MVRAKWKMVVSLILFMVSPGDG). Residues asparagine 83 and asparagine 134 are each glycosylated (N-linked (GlcNAc...) asparagine). Serine 206 is an active-site residue. N-linked (GlcNAc...) asparagine glycosylation is found at asparagine 309 and asparagine 350. Active-site residues include aspartate 390 and histidine 450.

The protein belongs to the peptidase S10 family.

Functionally, may be involved in the digestion of phagocytosed particles in the lysosome, participation in an inflammatory protease cascade, and trimming of peptides for antigen presentation. In Mus musculus (Mouse), this protein is Probable serine carboxypeptidase CPVL (Cpvl).